A 186-amino-acid polypeptide reads, in one-letter code: TATA-box-binding protein D (186 aa).

2 consecutive repeat copies span residues 10–86 and 101–179.

Belongs to the TBP family.

Functionally, general factor that plays a role in the activation of archaeal genes transcribed by RNA polymerase. Binds specifically to the TATA box promoter element which lies close to the position of transcription initiation. In Halobacterium salinarum (strain ATCC 700922 / JCM 11081 / NRC-1) (Halobacterium halobium), this protein is TATA-box-binding protein D (tbpD).